Reading from the N-terminus, the 469-residue chain is MTNLTLRNQLTPKQIVEKLDQYIIGQNGAKKSVAVALRNRYRRQLMDESIRDEIIPKNILMIGPTGVGKTEIARRIAKIVRAPFSKVEATKFTEVGYVGRDVESMVRDLVEVSVRLVKEEKMQLVRVKAEKNAEKRLIKLLAPSQKKKQTTSQNPLEALFGGMNQPDESPEEEVDQELKNKRSQIEWRLQNGELDDEIVTVEVKEQQNPMLDMMRGAGMDQMNGMQDALSGMFPAKKKKRKVTVREAKKILFEDEASKLIDADELAAEGIHRAEQMGMIFIDEIDKIASKEGGGNAQVSREGVQRDILPIVEGSQISTKYGTVNTEYILFIAAGAFHMSKPSDLIPELQGRFPIRIELDKLTQEDFYKILTEPDNALIKQYKALLKTEGIDLIFTKEAVERIAEIAFQVNQDSDNIGARRLHTILEKLLEDLLFEAPEINMESIKVTENYVNEKLAPIMQNKDLTQFIL.

ATP is bound by residues Ile24, 66–71 (GVGKTE), Asp282, Glu347, and Arg419.

Belongs to the ClpX chaperone family. HslU subfamily. A double ring-shaped homohexamer of HslV is capped on each side by a ring-shaped HslU homohexamer. The assembly of the HslU/HslV complex is dependent on binding of ATP.

It is found in the cytoplasm. In terms of biological role, ATPase subunit of a proteasome-like degradation complex; this subunit has chaperone activity. The binding of ATP and its subsequent hydrolysis by HslU are essential for unfolding of protein substrates subsequently hydrolyzed by HslV. HslU recognizes the N-terminal part of its protein substrates and unfolds these before they are guided to HslV for hydrolysis. In Listeria monocytogenes serovar 1/2a (strain ATCC BAA-679 / EGD-e), this protein is ATP-dependent protease ATPase subunit HslU.